Reading from the N-terminus, the 297-residue chain is Myoblast determination protein 1 homolog (297 aa).

Residues 52-76 (KPEEHPHHHGHHHGHPHEEEHVRAP) form a disordered region. Residues 101–152 (DRRKAATMRERRRLSKVNEAFETLKRCTSTNPNQRLPKVEILRNAIRYIESL) form the bHLH domain. 2 disordered regions span residues 171 to 221 (SGES…GKSS) and 243 to 297 (CPIL…YQVL). 2 stretches are compositionally biased toward polar residues: residues 174–184 (SDASSPRSNCS) and 258–297 (CSPQ…YQVL).

In terms of assembly, efficient DNA binding requires dimerization with another bHLH protein. Seems to form active heterodimers with ITF-2.

It localises to the nucleus. In terms of biological role, acts as a transcriptional activator that promotes transcription of muscle-specific target genes and plays a role in muscle differentiation. Induces fibroblasts to differentiate into myoblasts. Interacts with and is inhibited by the twist protein. This interaction probably involves the basic domains of both proteins. The polypeptide is Myoblast determination protein 1 homolog (MYOD1) (Coturnix japonica (Japanese quail)).